A 533-amino-acid chain; its full sequence is Probable galacturonosyltransferase 13 (533 aa).

The Cytoplasmic portion of the chain corresponds to 1–40 (MQLHISPSMRSITISSSNEFIDLMKIKVAARHISYRTLFH). Residues 41–61 (TILILAFLLPFVFILTAVVTL) traverse the membrane as a helical; Signal-anchor for type II membrane protein segment. The Lumenal segment spans residues 62–533 (EGVNKCSSFD…DFIKNCHILE (472 aa)). N-linked (GlcNAc...) asparagine glycosylation is found at Asn306, Asn396, Asn445, and Asn520.

Belongs to the glycosyltransferase 8 family. In terms of tissue distribution, expressed in roots, inflorescences, siliques, leaves and stems. Accumulates in pollen grains.

The protein resides in the golgi apparatus membrane. Its pathway is glycan metabolism; pectin biosynthesis. Its function is as follows. May be involved in pectin and/or xylans biosynthesis in cell walls. Together with GAUT14, required for pollen tube growth, possibly through the regulation of pectin biosynthesis and repartition in the pollen tube wall. This is Probable galacturonosyltransferase 13 from Arabidopsis thaliana (Mouse-ear cress).